Here is a 298-residue protein sequence, read N- to C-terminus: Myozenin-1 (298 aa).

Residues 1–34 (MPLSGTPAPNKKRKSSKLIMELTGGGQESSGLNL) are disordered. Position 82 is a phosphoserine (S82). The disordered stretch occupies residues 105–173 (FSYSKGSSGG…TGTGDQAGGE (69 aa)). Positions 118 to 129 (GSSSAGQYGSGQ) are enriched in low complexity. Residues 136–172 (SGSGSGGAGGPGSQTGRGGDAGTTGVGETGTGDQAGG) show a composition bias toward gly residues.

Belongs to the myozenin family. Interacts with ACTN2, ACTN3, FLNA, FLNB, FLNC, LDB3, PPP3CA and TCAP. Interacts via its C-terminal region with MYOT.

It localises to the nucleus. The protein localises to the cell projection. It is found in the pseudopodium. In terms of biological role, myozenins may serve as intracellular binding proteins involved in linking Z-disk proteins such as alpha-actinin, gamma-filamin, TCAP/telethonin, LDB3/ZASP and localizing calcineurin signaling to the sarcomere. Plays an important role in the modulation of calcineurin signaling. May play a role in myofibrillogenesis. The sequence is that of Myozenin-1 (MYOZ1) from Sus scrofa (Pig).